The chain runs to 288 residues: MKSTSATKFSVLAAATFAAAHGIVSDIKFDNDWYTSSLVYQDPYANPVPERITWSFFGSGNGPVADFTTKDIVCNGNAKAAALVADVKAGATATFYWTVWPESHRGPVMTYLANCGGDCRTVDPSSLSYFKIDHAGYENGEWISDKIIANNNSYSLTIPEDIAPGNYLIRHELLALHSAYDELGAQFYPMCANLKISGSGTANPPGVKFPGAYKKDDAGILVNIYNGLTSYQIPGPEPYKSGSGSSDNAAEAVSSAAAEEPAAAATSAAAEEPAAAATSAAAATSAAX.

Positions 1-22 (MKSTSATKFSVLAAATFAAAHG) are cleaved as a signal peptide. The Cu(2+) site is built by His-21 and His-104. 2 disulfides stabilise this stretch: Cys-74/Cys-191 and Cys-115/Cys-119. The N-linked (GlcNAc...) asparagine glycan is linked to Asn-151. The O2 site is built by His-177 and Gln-186. Tyr-188 is a binding site for Cu(2+). The tract at residues 236–270 (PEPYKSGSGSSDNAAEAVSSAAAEEPAAAATSAAA) is disordered. Positions 249-270 (AAEAVSSAAAEEPAAAATSAAA) are enriched in low complexity.

The protein belongs to the polysaccharide monooxygenase AA9 family. Requires Cu(2+) as cofactor.

The protein localises to the secreted. The enzyme catalyses [(1-&gt;4)-beta-D-glucosyl]n+m + reduced acceptor + O2 = 4-dehydro-beta-D-glucosyl-[(1-&gt;4)-beta-D-glucosyl]n-1 + [(1-&gt;4)-beta-D-glucosyl]m + acceptor + H2O.. In terms of biological role, lytic polysaccharide monooxygenase (LPMO) that depolymerizes crystalline and amorphous polysaccharides via the oxidation of scissile alpha- or beta-(1-4)-glycosidic bonds, yielding C1 and C4 oxidation products. Catalysis by LPMOs requires the reduction of the active-site copper from Cu(II) to Cu(I) by a reducing agent and H(2)O(2) or O(2) as a cosubstrate. Active on cellulose and on xyloglucan for deconstruction of plant biomass. The polypeptide is AA9 family lytic polysaccharide monooxygenase A (Geotrichum candidum (Oospora lactis)).